The primary structure comprises 266 residues: Norfluorocurarine synthase 2 (266 aa).

The AB hydrolase-1 domain maps to His-11–Ile-121. Catalysis depends on residues Ser-86, Asp-216, and His-244.

This sequence belongs to the AB hydrolase superfamily. Homodimer. In terms of tissue distribution, mainly expressed in roots.

It catalyses the reaction 17-dehydropreakuammicine + H2O = norfluorocurarine + methanol + CO2. Its pathway is alkaloid biosynthesis. In terms of biological role, hydrolase involved in the biosynthesis of curare monoterpene indole alkaloids (MIAs), natural products such as strychnine, a neurotoxic compound used as a pesticide to control rodents, and its pharmacologically active derivatives, including brucine, used to regulate blood pressure. Curare alkaloids act as animal glycine receptor antagonists. Catalyzes the conversion of dehydropreakuammicine to norfluorocurarine. This chain is Norfluorocurarine synthase 2, found in Strychnos nux-vomica (Poison nut).